A 181-amino-acid polypeptide reads, in one-letter code: uncharacterized protein (181 aa).

Residues 162-181 form a disordered region; sequence QARGPAGTRTPQRRCSSHEA.

This is an uncharacterized protein from Homo sapiens (Human).